The sequence spans 506 residues: Histidine ammonia-lyase (506 aa).

The 5-imidazolinone (Ala-Gly) cross-link spans Ala-142–Gly-144. Ser-143 carries the 2,3-didehydroalanine (Ser) modification.

This sequence belongs to the PAL/histidase family. In terms of processing, contains an active site 4-methylidene-imidazol-5-one (MIO), which is formed autocatalytically by cyclization and dehydration of residues Ala-Ser-Gly.

The protein localises to the cytoplasm. It carries out the reaction L-histidine = trans-urocanate + NH4(+). It participates in amino-acid degradation; L-histidine degradation into L-glutamate; N-formimidoyl-L-glutamate from L-histidine: step 1/3. This chain is Histidine ammonia-lyase, found in Bacillus cereus (strain B4264).